The primary structure comprises 88 residues: Large ribosomal subunit protein bL31B (88 aa).

The protein belongs to the bacterial ribosomal protein bL31 family. Type B subfamily. As to quaternary structure, part of the 50S ribosomal subunit.

The sequence is that of Large ribosomal subunit protein bL31B from Burkholderia orbicola (strain MC0-3).